A 200-amino-acid chain; its full sequence is NADH-quinone oxidoreductase subunit B (200 aa).

[4Fe-4S] cluster contacts are provided by Cys-78, Cys-79, Cys-144, and Cys-174.

This sequence belongs to the complex I 20 kDa subunit family. In terms of assembly, NDH-1 is composed of 14 different subunits. Subunits NuoB, C, D, E, F, and G constitute the peripheral sector of the complex. Requires [4Fe-4S] cluster as cofactor.

It is found in the cell membrane. It carries out the reaction a quinone + NADH + 5 H(+)(in) = a quinol + NAD(+) + 4 H(+)(out). In terms of biological role, NDH-1 shuttles electrons from NADH, via FMN and iron-sulfur (Fe-S) centers, to quinones in the respiratory chain. The immediate electron acceptor for the enzyme in this species is believed to be ubiquinone. Couples the redox reaction to proton translocation (for every two electrons transferred, four hydrogen ions are translocated across the cytoplasmic membrane), and thus conserves the redox energy in a proton gradient. The polypeptide is NADH-quinone oxidoreductase subunit B (Dehalococcoides mccartyi (strain CBDB1)).